The following is a 387-amino-acid chain: Succinate--CoA ligase [ADP-forming] subunit beta (387 aa).

The ATP-grasp domain maps to 9-245; it reads KDLLESYGLK…KSQENAKELK (237 aa). Residues Lys-46, 53-55, Glu-100, Tyr-103, and Glu-108 each bind ATP; that span reads GRG. Asn-200 and Asp-214 together coordinate Mg(2+). Residues Asn-265 and 322–324 contribute to the substrate site; that span reads GIV.

It belongs to the succinate/malate CoA ligase beta subunit family. In terms of assembly, heterotetramer of two alpha and two beta subunits. Mg(2+) is required as a cofactor.

The catalysed reaction is succinate + ATP + CoA = succinyl-CoA + ADP + phosphate. The enzyme catalyses GTP + succinate + CoA = succinyl-CoA + GDP + phosphate. It functions in the pathway carbohydrate metabolism; tricarboxylic acid cycle; succinate from succinyl-CoA (ligase route): step 1/1. Succinyl-CoA synthetase functions in the citric acid cycle (TCA), coupling the hydrolysis of succinyl-CoA to the synthesis of either ATP or GTP and thus represents the only step of substrate-level phosphorylation in the TCA. The beta subunit provides nucleotide specificity of the enzyme and binds the substrate succinate, while the binding sites for coenzyme A and phosphate are found in the alpha subunit. In Francisella tularensis subsp. mediasiatica (strain FSC147), this protein is Succinate--CoA ligase [ADP-forming] subunit beta.